The following is a 201-amino-acid chain: Probable molybdenum cofactor guanylyltransferase (201 aa).

Residues 16–18 (LAG), Lys-28, Asp-75, and Asp-107 each bind GTP. Position 107 (Asp-107) interacts with Mg(2+).

Belongs to the MobA family. It depends on Mg(2+) as a cofactor.

Its subcellular location is the cytoplasm. It catalyses the reaction Mo-molybdopterin + GTP + H(+) = Mo-molybdopterin guanine dinucleotide + diphosphate. Functionally, transfers a GMP moiety from GTP to Mo-molybdopterin (Mo-MPT) cofactor (Moco or molybdenum cofactor) to form Mo-molybdopterin guanine dinucleotide (Mo-MGD) cofactor. The protein is Probable molybdenum cofactor guanylyltransferase of Mycobacterium marinum (strain ATCC BAA-535 / M).